The chain runs to 44 residues: Photosystem I reaction center subunit IX (44 aa).

The helical transmembrane segment at 7–27 (YLSVAPVLSTLWFGSLAGLLI) threads the bilayer.

It belongs to the PsaJ family.

The protein resides in the plastid. Its subcellular location is the chloroplast thylakoid membrane. May help in the organization of the PsaE and PsaF subunits. The sequence is that of Photosystem I reaction center subunit IX from Arabis hirsuta (Hairy rock-cress).